The following is an 83-amino-acid chain: Aspergillic acid biosynthesis cluster protein F (83 aa).

It functions in the pathway secondary metabolite biosynthesis. In terms of biological role, part of the gene cluster that mediates the biosynthesis of aspergillic acid, a hydroxamic acid-containing pyrazinone with aliphatic side chains that originates from leucine (Leu) and isoleucine (Ile). Aspergillic acid has antibiotic properties and was shown to be lethal to mice. The first step in the pathway is the production of deoxyaspergillic acid via a condensation between the Ile amine and the Leu carboxylic acid, followed by a reductive release from the protein forming the dipeptide aldehyde NH(2)-Leu-Ile-CHO, which could undergo an intermolecular cyclization resulting in a dihydropyrazinone. As the NRPS asaC lacks a condensation domain, it is improbable that it is responsible for condensation of Leu and Ile. One possibility is that asaC acts on a previously condensed dipeptide and functions as a Leu-Ile reductase to yield deoxyaspergillic acid. After asaC forms deoxyaspergillic acid, the cytochrome P450 asaD oxidizes the pyrazinone to the hydroxamic acid-containing bioactive metabolite aspergillic acid. The hydroxylase/desaturase asaB can then convert aspergillic acid to hydroxyaspergillic acid. Both aspergillic acid and hydroxyaspergillic acid can form complexes with iron producing ferriaspergillin analogs. This chain is Aspergillic acid biosynthesis cluster protein F, found in Aspergillus flavus (strain ATCC 200026 / FGSC A1120 / IAM 13836 / NRRL 3357 / JCM 12722 / SRRC 167).